The sequence spans 179 residues: Large ribosomal subunit protein bL27c (179 aa).

A chloroplast-targeting transit peptide spans 1–51 (MAVSFSLVGAFKGLSLASSSSFLKGDFGAAFPVAPKFSVSFPLKSPLTIES).

It belongs to the bacterial ribosomal protein bL27 family. Part of the 50S ribosomal subunit.

It is found in the plastid. Its subcellular location is the chloroplast. This is Large ribosomal subunit protein bL27c (RPL27) from Nicotiana tabacum (Common tobacco).